The chain runs to 476 residues: ATP synthase subunit beta (476 aa).

Glycine 153–threonine 160 is a binding site for ATP.

This sequence belongs to the ATPase alpha/beta chains family. In terms of assembly, F-type ATPases have 2 components, CF(1) - the catalytic core - and CF(0) - the membrane proton channel. CF(1) has five subunits: alpha(3), beta(3), gamma(1), delta(1), epsilon(1). CF(0) has three main subunits: a(1), b(2) and c(9-12). The alpha and beta chains form an alternating ring which encloses part of the gamma chain. CF(1) is attached to CF(0) by a central stalk formed by the gamma and epsilon chains, while a peripheral stalk is formed by the delta and b chains.

The protein resides in the cell membrane. It catalyses the reaction ATP + H2O + 4 H(+)(in) = ADP + phosphate + 5 H(+)(out). Its function is as follows. Produces ATP from ADP in the presence of a proton gradient across the membrane. The catalytic sites are hosted primarily by the beta subunits. This Latilactobacillus sakei subsp. sakei (strain 23K) (Lactobacillus sakei subsp. sakei) protein is ATP synthase subunit beta.